Here is a 143-residue protein sequence, read N- to C-terminus: Nucleoside diphosphate kinase (143 aa).

The ATP site is built by Lys11, Phe59, Arg87, Thr93, Arg104, and Asn114. His117 (pros-phosphohistidine intermediate) is an active-site residue.

It belongs to the NDK family. Homotetramer. It depends on Mg(2+) as a cofactor.

The protein resides in the cytoplasm. It catalyses the reaction a 2'-deoxyribonucleoside 5'-diphosphate + ATP = a 2'-deoxyribonucleoside 5'-triphosphate + ADP. The catalysed reaction is a ribonucleoside 5'-diphosphate + ATP = a ribonucleoside 5'-triphosphate + ADP. Its function is as follows. Major role in the synthesis of nucleoside triphosphates other than ATP. The ATP gamma phosphate is transferred to the NDP beta phosphate via a ping-pong mechanism, using a phosphorylated active-site intermediate. The protein is Nucleoside diphosphate kinase of Citrobacter koseri (strain ATCC BAA-895 / CDC 4225-83 / SGSC4696).